The chain runs to 85 residues: Large ribosomal subunit protein bL27 (85 aa).

Over residues 1–13 (MAKTKSGGSTSNG) the composition is skewed to polar residues. Residues 1 to 26 (MAKTKSGGSTSNGRDSKGRRLGQKLG) form a disordered region.

This sequence belongs to the bacterial ribosomal protein bL27 family.

The chain is Large ribosomal subunit protein bL27 from Mycoplasma mobile (strain ATCC 43663 / 163K / NCTC 11711) (Mesomycoplasma mobile).